The sequence spans 139 residues: Stress-related protein 1 (139 aa).

Polar residues predominate over residues 1–12 (MTSESSTPTGST). Positions 1-86 (MTSESSTPTG…AERPGSATTP (86 aa)) are disordered. Composition is skewed to low complexity over residues 14-53 (ALPA…SLVV) and 60-74 (SPVV…TRPR). At S60 the chain carries Phosphoserine.

As to expression, embryo.

Functionally, involved in drought, heat, cold, and/or salt tolerance. This chain is Stress-related protein 1 (SRP1), found in Zea mays (Maize).